The primary structure comprises 267 residues: 4-hydroxy-tetrahydrodipicolinate reductase (267 aa).

Residues 12-17, 100-102, and 126-129 contribute to the NAD(+) site; these read GPRGRM, GTT, and APNF. Catalysis depends on histidine 156, which acts as the Proton donor/acceptor. Position 157 (histidine 157) interacts with (S)-2,3,4,5-tetrahydrodipicolinate. Lysine 160 acts as the Proton donor in catalysis. 166-167 is a binding site for (S)-2,3,4,5-tetrahydrodipicolinate; that stretch reads GT.

It belongs to the DapB family.

Its subcellular location is the cytoplasm. It carries out the reaction (S)-2,3,4,5-tetrahydrodipicolinate + NAD(+) + H2O = (2S,4S)-4-hydroxy-2,3,4,5-tetrahydrodipicolinate + NADH + H(+). The enzyme catalyses (S)-2,3,4,5-tetrahydrodipicolinate + NADP(+) + H2O = (2S,4S)-4-hydroxy-2,3,4,5-tetrahydrodipicolinate + NADPH + H(+). Its pathway is amino-acid biosynthesis; L-lysine biosynthesis via DAP pathway; (S)-tetrahydrodipicolinate from L-aspartate: step 4/4. Functionally, catalyzes the conversion of 4-hydroxy-tetrahydrodipicolinate (HTPA) to tetrahydrodipicolinate. The protein is 4-hydroxy-tetrahydrodipicolinate reductase of Bacillus velezensis (strain DSM 23117 / BGSC 10A6 / LMG 26770 / FZB42) (Bacillus amyloliquefaciens subsp. plantarum).